The sequence spans 370 residues: Spermidine/putrescine import ATP-binding protein PotA (370 aa).

Positions 11–241 (IELRSITKSY…PKNLFVAKFI (231 aa)) constitute an ABC transporter domain. 43–50 (GPSGCGKT) contributes to the ATP binding site.

It belongs to the ABC transporter superfamily. Spermidine/putrescine importer (TC 3.A.1.11.1) family. In terms of assembly, the complex is composed of two ATP-binding proteins (PotA), two transmembrane proteins (PotB and PotC) and a solute-binding protein (PotD).

It is found in the cell inner membrane. The enzyme catalyses ATP + H2O + polyamine-[polyamine-binding protein]Side 1 = ADP + phosphate + polyamineSide 2 + [polyamine-binding protein]Side 1.. Functionally, part of the ABC transporter complex PotABCD involved in spermidine/putrescine import. Responsible for energy coupling to the transport system. The polypeptide is Spermidine/putrescine import ATP-binding protein PotA (Pasteurella multocida (strain Pm70)).